The following is a 163-amino-acid chain: Adenosine 5'-monophosphoramidase HINT2 (163 aa).

A mitochondrion-targeting transit peptide spans 1–17; the sequence is MAAAVLLAVGLRAARRT. Lysine 45 carries the N6-succinyllysine modification. The region spanning 55-163 is the HIT domain; sequence IFSRILDRSL…GGRQLQWPPG (109 aa). Residues serine 63 and aspartate 80 each coordinate AMP. Lysine 119 is modified (N6-acetyllysine). Position 128 is an N6-acetyllysine; alternate (lysine 128). Residue lysine 128 is modified to N6-succinyllysine; alternate. Asparagine 136 contributes to the AMP binding site. Lysine 139 is subject to N6-acetyllysine. AMP-binding positions include 142–145 and 149–151; these read AQSV and HIH. A Histidine triad motif motif is present at residues 147-151; the sequence is HLHIH. Histidine 149 serves as the catalytic Tele-AMP-histidine intermediate.

It belongs to the HINT family.

It is found in the mitochondrion. The catalysed reaction is adenosine 5'-phosphoramidate + H2O = AMP + NH4(+). In terms of biological role, exhibits adenosine 5'-monophosphoramidase activity, hydrolyzing purine nucleotide phosphoramidates with a single phosphate group such as adenosine 5'monophosphoramidate (AMP-NH2) to yield AMP and NH2. Hydrolyzes adenosine 5'-O-p-nitrophenylphosphoramidate (AMP-pNA). May be involved in steroid biosynthesis. May play a role in apoptosis. The polypeptide is Adenosine 5'-monophosphoramidase HINT2 (Mus musculus (Mouse)).